A 156-amino-acid chain; its full sequence is Snaclec A3 (156 aa).

The N-terminal stretch at 1-23 is a signal peptide; sequence MGRSISVSFGLLVVFLSLSGTGA. Disulfide bonds link cysteine 27/cysteine 38, cysteine 55/cysteine 154, and cysteine 129/cysteine 146. The 122-residue stretch at 34–155 folds into the C-type lectin domain; the sequence is HEGHCYKVFN…CGQPYRFTCE (122 aa).

This sequence belongs to the snaclec family. Heterodimer; disulfide-linked. In terms of tissue distribution, expressed by the venom gland.

The protein resides in the secreted. Interferes with one step of hemostasis (modulation of platelet aggregation, or coagulation cascade, for example). This chain is Snaclec A3, found in Macrovipera lebetinus (Levantine viper).